A 906-amino-acid polypeptide reads, in one-letter code: Protein translocase subunit SecA (906 aa).

Residues Gln-87, 105–109 (GEGKT), and Asp-512 each bind ATP. Residues 879 to 906 (REGEKIGRNDPCPCGSGQKYKQCHGKLS) form a disordered region. 4 residues coordinate Zn(2+): Cys-890, Cys-892, Cys-901, and His-902.

The protein belongs to the SecA family. In terms of assembly, monomer and homodimer. Part of the essential Sec protein translocation apparatus which comprises SecA, SecYEG and auxiliary proteins SecDF-YajC and YidC. Zn(2+) is required as a cofactor.

It localises to the cell inner membrane. Its subcellular location is the cytoplasm. It carries out the reaction ATP + H2O + cellular proteinSide 1 = ADP + phosphate + cellular proteinSide 2.. Its function is as follows. Part of the Sec protein translocase complex. Interacts with the SecYEG preprotein conducting channel. Has a central role in coupling the hydrolysis of ATP to the transfer of proteins into and across the cell membrane, serving both as a receptor for the preprotein-SecB complex and as an ATP-driven molecular motor driving the stepwise translocation of polypeptide chains across the membrane. The sequence is that of Protein translocase subunit SecA from Shewanella frigidimarina (strain NCIMB 400).